The primary structure comprises 345 residues: Polyprenyl transferase dpmpC (345 aa).

A run of 8 helical transmembrane segments spans residues 24-44 (PVFA…ARLA), 60-80 (GLCF…NDWV), 101-121 (VTTF…WYLL), 183-203 (LYVY…VIGW), 220-240 (CLPL…AYSY), 261-281 (HLHL…LLFL), 286-306 (SFWL…EQLI), and 319-339 (LHKS…VELL).

It belongs to the UbiA prenyltransferase family. The cofactor is Mg(2+).

The protein resides in the membrane. Its pathway is secondary metabolite biosynthesis; terpenoid biosynthesis. In terms of biological role, polyprenyl transferase; part of the gene cluster that mediates the biosynthesis of diterpenoid pyrones. The first step of the pathway is the synthesis of the alpha-pyrone moiety by the polyketide synthase dpmpA via condensation of one acetyl-CoA starter unit with 3 malonyl-CoA units and 2 methylations. The alpha-pyrone is then combined with geranylgeranyl pyrophosphate (GGPP) formed by the GGPP synthase dpmpD through the action of the prenyltransferase dpmpC to yield a linear alpha-pyrone diterpenoid. Subsequent steps in the diterpenoid pyrone biosynthetic pathway involve the decalin core formation, which is initiated by the epoxidation of the C10-C11 olefin by the FAD-dependent oxidoreductase dpmpE, and is followed by a cyclization cascade catalyzed by the terpene cyclase dpmpB. The short chain dehydrogenase/reductase dpmpG then oxidizes the 8S hydroxy group to a ketone and the short chain dehydrogenase/reductase dpmpH reduces the ketone to the 8R hydroxy group to yield higginsianin B. Higginsianin B is further methylated by the methyltransferase dpmpI to produce the intermediate named FDDP B. The cytochrome P450 monooxygenase dpmpJ then oxidizes the C-26 methyl to primary alcohol, producing the final diterpenoid pyrone with a C-26 primary alcohol on the gamma-pyrone moiety named FDDP C. The sequence is that of Polyprenyl transferase dpmpC from Macrophomina phaseolina (strain MS6) (Charcoal rot fungus).